The sequence spans 693 residues: Elongation factor G (693 aa).

The tr-type G domain maps to 8–283; that stretch reads NRCRNIGIMA…AVVDYLPSPL (276 aa). Residues 17–24, 81–85, and 135–138 contribute to the GTP site; these read AHIDAGKT, DTPGH, and NKMD.

The protein belongs to the TRAFAC class translation factor GTPase superfamily. Classic translation factor GTPase family. EF-G/EF-2 subfamily.

The protein localises to the cytoplasm. Functionally, catalyzes the GTP-dependent ribosomal translocation step during translation elongation. During this step, the ribosome changes from the pre-translocational (PRE) to the post-translocational (POST) state as the newly formed A-site-bound peptidyl-tRNA and P-site-bound deacylated tRNA move to the P and E sites, respectively. Catalyzes the coordinated movement of the two tRNA molecules, the mRNA and conformational changes in the ribosome. The polypeptide is Elongation factor G (Acidobacterium capsulatum (strain ATCC 51196 / DSM 11244 / BCRC 80197 / JCM 7670 / NBRC 15755 / NCIMB 13165 / 161)).